A 445-amino-acid chain; its full sequence is uncharacterized protein (445 aa).

The next 8 membrane-spanning stretches (helical) occupy residues 16-36, 52-72, 98-118, 168-188, 219-239, 243-263, 283-303, and 366-386; these read IVSL…AFLI, LLAS…GYLL, VHSL…AGGC, GLMF…LGIV, ASAL…VWLI, GWSV…GALG, LIAA…NEGS, and AAYP…VPLV. The disordered stretch occupies residues 417-445; it reads AWPNGPRRPGPPGQPRRVRQGGTAITPPT.

The protein belongs to the major facilitator superfamily.

The protein localises to the cell membrane. This is an uncharacterized protein from Mycobacterium tuberculosis (strain ATCC 25618 / H37Rv).